The following is a 156-amino-acid chain: MAATLTPEQITEYKGIFEMFDEEGNGLVKTDDLESLMSLIGINPTKRDLANMAKDVDKDKKGTFNCDGFLVLMGIYHEKSKNQDEELRAAFKVFDKEHKGYIEWDTLKYVLMNAGEPLNEHEAELMMKEADKDGDGTIDYEEFVAMMTGESFKLTQ.

4 EF-hand domains span residues 8–43, 44–79, 82–117, and 118–153; these read EQIT…IGIN, PTKR…YHEK, NQDE…AGEP, and LNEH…ESFK. Ca(2+) is bound by residues aspartate 131, aspartate 133, aspartate 135, threonine 137, and glutamate 142.

It belongs to the calmodulin family. Calglandulin subfamily. Expressed by the venom gland.

Its subcellular location is the cytoplasm. Functionally, may be involved in the cellular control mechanism of the secretion of toxins from the gland into the venom. In Hoplocephalus stephensii (Stephens's banded snake), this protein is Calglandulin.